Reading from the N-terminus, the 1718-residue chain is PR domain zinc finger protein 2 (1718 aa).

The SET domain maps to 28–141; that stretch reads EEVRLFPSAV…PGEELLVWYN (114 aa). The interval 155 to 335 is disordered; the sequence is ERASARSKRS…TSEETLEDCS (181 aa). Over residues 159-173 the composition is skewed to basic residues; sequence ARSKRSSPKSRKGKK. Positions 189–202 are enriched in polar residues; it reads QLKTSEPDFTSANM. Over residues 204 to 216 the composition is skewed to basic and acidic residues; that stretch reads DSAEGPKEDEEKP. Acidic residues predominate over residues 265 to 297; the sequence is DLGEEEEEEEEEDEEEEEDDDDDELEDEGEEEA. Positions 294–316 are retinoblastoma protein binding; the sequence is EEEASMPNENSVKEPEIRCDEKP. Residues 304 to 327 show a composition bias toward basic and acidic residues; sequence SVKEPEIRCDEKPEDLLEEPKTTS. A Glycyl lysine isopeptide (Lys-Gly) (interchain with G-Cter in SUMO2) cross-link involves residue Lys347. 2 consecutive C2H2-type zinc fingers follow at residues 360-382 and 390-412; these read FPCQ…MHIH and FKCK…ERRH. Residues 405-457 form a disordered region; the sequence is RRRHERRHEAGLKRKPSQTLQPSEDLADGKASGENVASKDDSSPPSLGPDCLI. At Ser421 the chain carries Phosphoserine. A C2H2-type 3 zinc finger spans residues 483 to 506; it reads HPCKYCKKVFGTHTNMRRHQRRVH. Disordered regions lie at residues 513–550 and 622–660; these read KGVR…EGEA and EDLP…DPMV. The residue at position 643 (Ser643) is a Phosphoserine. Glycyl lysine isopeptide (Lys-Gly) (interchain with G-Cter in SUMO2) cross-links involve residues Lys651, Lys690, and Lys692. The disordered stretch occupies residues 729–797; the sequence is TSSRFKRRTS…GRDERETVSP (69 aa). Positions 738-748 are enriched in low complexity; that stretch reads SSPPSSPQHSP. The residue at position 743 (Ser743) is a Phosphoserine. A Glycyl lysine isopeptide (Lys-Gly) (interchain with G-Cter in SUMO2) cross-link involves residue Lys774. A phosphoserine mark is found at Ser781, Ser785, and Ser796. Glycyl lysine isopeptide (Lys-Gly) (interchain with G-Cter in SUMO2) cross-links involve residues Lys866 and Lys879. The segment at 903-1083 is disordered; it reads VENPADGTRS…SPPPLSAISS (181 aa). Residues 951 to 969 show a composition bias toward low complexity; sequence LQTPSLSSGQLPPLLIPTD. 2 consecutive short sequence motifs (SH3-binding) follow at residues 970-979 and 985-998; these read PSSPPPCPPV and PPPP…LPAP. A compositionally biased stretch (pro residues) spans 970-997; the sequence is PSSPPPCPPVLTVATPPPPLLPTVPLPA. Low complexity predominate over residues 1018-1027; the sequence is SPLPILSPTV. Residues 1028–1038 are compositionally biased toward pro residues; sequence SPSPSPIPPVE. The SH3-binding motif lies at 1028–1052; sequence SPSPSPIPPVEPLMSAASPGPPTLS. Low complexity predominate over residues 1042-1072; sequence SAASPGPPTLSSSSSSSSSSSSFSSSSSSSS. 3 consecutive C2H2-type zinc fingers follow at residues 1134–1156, 1162–1185, and 1191–1214; these read FVCN…LSIH, FKCE…FLLH, and FVCS…RDLH. Residues Lys1147 and Lys1151 each participate in a glycyl lysine isopeptide (Lys-Gly) (interchain with G-Cter in SUMO2) cross-link. Residues 1244–1265 are disordered; the sequence is HMQSLPEDPLETSKEEEELNDS. A compositionally biased stretch (acidic residues) spans 1251-1265; it reads DPLETSKEEEELNDS. Residues Lys1257 and Lys1281 each participate in a glycyl lysine isopeptide (Lys-Gly) (interchain with G-Cter in SUMO2) cross-link. The segment at 1333–1355 adopts a C2H2-type 7; atypical zinc-finger fold; sequence IRCTKCGKGVDNMPELHKHILAC. The C2H2-type 8; atypical zinc finger occupies 1455 to 1478; sequence HICPYCNREFTYIGSLNKHAAFSC. Disordered stretches follow at residues 1478 to 1576, 1589 to 1612, and 1625 to 1652; these read CPKK…LRNS, GKKP…RSLH, and KSTL…VTRS. Over residues 1486–1498 the composition is skewed to basic residues; the sequence is PKKKVSHSSKKGG. Positions 1499–1511 are enriched in low complexity; the sequence is HSSPASSDKNSNS. Composition is skewed to polar residues over residues 1525 to 1556 and 1599 to 1608; these read QSMQ…SKQN and HSAQLSSKTS. Positions 1635–1645 are enriched in basic and acidic residues; it reads DRFNIKSRERS.

It belongs to the class V-like SAM-binding methyltransferase superfamily. In terms of assembly, binds to the retinoblastoma protein (RB). Interacts with GATA3. Highly expressed in retinoblastoma cell lines and in brain tumors. Also expressed in a number of other cell lines and in brain, heart, skeletal muscle, liver and spleen. Isoform 1 is expressed in testis at much higher level than isoform 3.

The protein localises to the nucleus. It carries out the reaction L-lysyl(9)-[histone H3] + 3 S-adenosyl-L-methionine = N(6),N(6),N(6)-trimethyl-L-lysyl(9)-[histone H3] + 3 S-adenosyl-L-homocysteine + 3 H(+). Functionally, S-adenosyl-L-methionine-dependent histone methyltransferase that specifically methylates 'Lys-9' of histone H3. May function as a DNA-binding transcription factor. Binds to the macrophage-specific TPA-responsive element (MTE) of the HMOX1 (heme oxygenase 1) gene and may act as a transcriptional activator of this gene. In Homo sapiens (Human), this protein is PR domain zinc finger protein 2 (PRDM2).